The sequence spans 296 residues: 4-diphosphocytidyl-2-C-methyl-D-erythritol kinase (296 aa).

Lys-13 is a catalytic residue. Pro-104–Ser-114 provides a ligand contact to ATP. The active site involves Asp-146.

This sequence belongs to the GHMP kinase family. IspE subfamily.

The catalysed reaction is 4-CDP-2-C-methyl-D-erythritol + ATP = 4-CDP-2-C-methyl-D-erythritol 2-phosphate + ADP + H(+). It participates in isoprenoid biosynthesis; isopentenyl diphosphate biosynthesis via DXP pathway; isopentenyl diphosphate from 1-deoxy-D-xylulose 5-phosphate: step 3/6. Its function is as follows. Catalyzes the phosphorylation of the position 2 hydroxy group of 4-diphosphocytidyl-2C-methyl-D-erythritol. This Hahella chejuensis (strain KCTC 2396) protein is 4-diphosphocytidyl-2-C-methyl-D-erythritol kinase.